Consider the following 600-residue polypeptide: ATP-dependent lipid A-core flippase (600 aa).

A run of 5 helical transmembrane segments spans residues 28–48 (IMAV…IAFI), 80–100 (IMLM…VANF), 182–202 (WKLS…ISVV), 267–287 (ISQP…LYAA), and 295–315 (DLTA…LQPI). Positions 28–327 (IMAVLGLITY…LTRVNAEFQR (300 aa)) constitute an ABC transmembrane type-1 domain. The region spanning 359 to 596 (LAFDNVTFAY…AGIYANLYQM (238 aa)) is the ABC transporter domain. 393–400 (GRSGSGKS) serves as a coordination point for ATP.

Belongs to the ABC transporter superfamily. Lipid exporter (TC 3.A.1.106) family. As to quaternary structure, homodimer.

Its subcellular location is the cell inner membrane. It catalyses the reaction ATP + H2O + lipid A-core oligosaccharideSide 1 = ADP + phosphate + lipid A-core oligosaccharideSide 2.. Its function is as follows. Involved in lipopolysaccharide (LPS) biosynthesis. Translocates lipid A-core from the inner to the outer leaflet of the inner membrane. Transmembrane domains (TMD) form a pore in the inner membrane and the ATP-binding domain (NBD) is responsible for energy generation. The protein is ATP-dependent lipid A-core flippase of Shewanella frigidimarina (strain NCIMB 400).